A 352-amino-acid polypeptide reads, in one-letter code: Protein RecA (352 aa).

67–74 (GPESSGKT) serves as a coordination point for ATP.

The protein belongs to the RecA family.

The protein resides in the cytoplasm. Can catalyze the hydrolysis of ATP in the presence of single-stranded DNA, the ATP-dependent uptake of single-stranded DNA by duplex DNA, and the ATP-dependent hybridization of homologous single-stranded DNAs. It interacts with LexA causing its activation and leading to its autocatalytic cleavage. This is Protein RecA from Chlamydia trachomatis serovar D (strain ATCC VR-885 / DSM 19411 / UW-3/Cx).